A 430-amino-acid polypeptide reads, in one-letter code: Serine--tRNA ligase (430 aa).

231-233 (TSE) lines the L-serine pocket. An ATP-binding site is contributed by 262-264 (RSE). Residue E285 coordinates L-serine. 349–352 (EISS) is a binding site for ATP. S385 contributes to the L-serine binding site.

It belongs to the class-II aminoacyl-tRNA synthetase family. Type-1 seryl-tRNA synthetase subfamily. As to quaternary structure, homodimer. The tRNA molecule binds across the dimer.

It is found in the cytoplasm. It carries out the reaction tRNA(Ser) + L-serine + ATP = L-seryl-tRNA(Ser) + AMP + diphosphate + H(+). It catalyses the reaction tRNA(Sec) + L-serine + ATP = L-seryl-tRNA(Sec) + AMP + diphosphate + H(+). It participates in aminoacyl-tRNA biosynthesis; selenocysteinyl-tRNA(Sec) biosynthesis; L-seryl-tRNA(Sec) from L-serine and tRNA(Sec): step 1/1. Its function is as follows. Catalyzes the attachment of serine to tRNA(Ser). Is also able to aminoacylate tRNA(Sec) with serine, to form the misacylated tRNA L-seryl-tRNA(Sec), which will be further converted into selenocysteinyl-tRNA(Sec). In Roseobacter denitrificans (strain ATCC 33942 / OCh 114) (Erythrobacter sp. (strain OCh 114)), this protein is Serine--tRNA ligase.